Consider the following 602-residue polypeptide: VIN3-like protein 1 (602 aa).

Residues 1 to 38 form a disordered region; the sequence is MDSSSTKSKISHSRKTNKKSNKKHESNGKQQQQQDVDG. A compositionally biased stretch (basic residues) spans 9–22; that stretch reads KISHSRKTNKKSNK. The segment at 67-137 adopts a PHD-type zinc-finger fold; that stretch reads RCSCCVCHNF…CFCCYSCGKV (71 aa). The short motif at 144–151 is the Nuclear localization signal element; that stretch reads WKKQLVAA. The Fibronectin type-III domain maps to 242–340; that stretch reads VPAACRFHFE…AMCFTKSVEI (99 aa). Positions 430-470 are disordered; it reads LNEEFTPPDSSGGEDNGVPLNSLAEADGGDHDDNCDDAVSN. The VIN3-Interacting Domain (VID) stretch occupies residues 502–602; it reads AISDSNDSEN…RPNNGVMTSH (101 aa).

In terms of assembly, interacts with VIN3 and VIL2. The heterodimer made of VIN3 and VIL1 is required for establishing the vernalization-induced epigenetic silencing of FLC. Component of the plant homeodomain / polycomb repressive complex 2 (PHD-PRC2) large complex during prolonged cold, composed of core PRC2 components (VRN2, EZA1, FIE and MSI1), and three related PHD finger proteins (VIL1, VIL2 and VIN3) that mediates histone H3 trimethylation on 'Lys-27' (H3K27me3). In terms of tissue distribution, accumulates in shoot and root apices, and in leaves.

The protein localises to the nucleus. Its subcellular location is the nucleus speckle. Its function is as follows. Involved in both the vernalization and photoperiod pathways by regulating expression of the related floral repressors FLOWERING LOCUS C (FLC) and FLOWERING LOCUS M (FLM). Together with VIN3, required during vernalization for the modifications of FLC and FLM chromatin that are associated with an epigenetically silenced state (e.g. chromatin modifications, histone deacetylation, and trimethylated H3 'Lys-4' H3K4me3 and 'Lys-27' H3K27me3) and with acquisition of competence to flower. Promotes flowering in short days (SD=8 hours light/16 hours dark). Associates dynamically at FLC locus; during vernalization, binds to specific sites, but when in warm conditions, distributed along the whole locus. The protein is VIN3-like protein 1 (VIL1) of Arabidopsis thaliana (Mouse-ear cress).